Consider the following 227-residue polypeptide: Phosphoribosylformylglycinamidine synthase subunit PurQ (227 aa).

Residues 3–225 enclose the Glutamine amidotransferase type-1 domain; it reads FAVIVFPGSN…LKQWRETYVV (223 aa). Cys86 serves as the catalytic Nucleophile. Active-site residues include His194 and Glu196.

As to quaternary structure, part of the FGAM synthase complex composed of 1 PurL, 1 PurQ and 2 PurS subunits.

It localises to the cytoplasm. The enzyme catalyses N(2)-formyl-N(1)-(5-phospho-beta-D-ribosyl)glycinamide + L-glutamine + ATP + H2O = 2-formamido-N(1)-(5-O-phospho-beta-D-ribosyl)acetamidine + L-glutamate + ADP + phosphate + H(+). The catalysed reaction is L-glutamine + H2O = L-glutamate + NH4(+). It functions in the pathway purine metabolism; IMP biosynthesis via de novo pathway; 5-amino-1-(5-phospho-D-ribosyl)imidazole from N(2)-formyl-N(1)-(5-phospho-D-ribosyl)glycinamide: step 1/2. In terms of biological role, part of the phosphoribosylformylglycinamidine synthase complex involved in the purines biosynthetic pathway. Catalyzes the ATP-dependent conversion of formylglycinamide ribonucleotide (FGAR) and glutamine to yield formylglycinamidine ribonucleotide (FGAM) and glutamate. The FGAM synthase complex is composed of three subunits. PurQ produces an ammonia molecule by converting glutamine to glutamate. PurL transfers the ammonia molecule to FGAR to form FGAM in an ATP-dependent manner. PurS interacts with PurQ and PurL and is thought to assist in the transfer of the ammonia molecule from PurQ to PurL. In Bacillus cereus (strain Q1), this protein is Phosphoribosylformylglycinamidine synthase subunit PurQ.